Here is a 618-residue protein sequence, read N- to C-terminus: MPIQVLPPQLANQIAAGEVVERPASVVKELVENSLDAGATRVDIDIERGGAKLIRIRDNGCGIKKEELALALARHATSKIASLDDLEAIISLGFRGEALASISSVSRLTLTSRTAEQAEAWQAYAEGRDMDVTVKPAAHPVGTTLEVLDLFYNTPARRKFMRTEKTEFNHIDEIIRRIALARFDVTLNLSHNGKLVRQYRAVAKDGQKERRLGAICGTPFLEQALAIEWQHGDLTLRGWVADPNHTTTALTEIQYCYVNGRMMRDRLINHAIRQACEDKLGADQQPAFVLYLEIDPHQVDVNVHPAKHEVRFHQSRLVHDFIYQGVLSVLQQQTETTLPLEEIAPAPRHVPENRIAAGRNHFAVPAEPTAAREPATPRYSDGASGGNGGRQSAGGWPHAQPGYQKQQGEVYRTLLQTPTTSPAPEPVAPALDGHSQSFGRVLTIVGGDCALLEHAGTIQLLSLPVAERWLRQAQLTPGQSPVCAQPLLIPLRLKVSADEKAALQKAQSLLGELGIEFQSDAQHVTIRAVPLPLRQQNLQILIPELIGYLAQQTTFATVNIAQWIARNVQSEHPQWSMAQAISLLADVERLCPQLVKAPPGGLLQPVDLHSAMNALKHE.

The segment covering 366-378 has biased composition (low complexity); it reads AEPTAAREPATPR. The segment at 366 to 403 is disordered; sequence AEPTAAREPATPRYSDGASGGNGGRQSAGGWPHAQPGY. Over residues 383–392 the composition is skewed to gly residues; it reads ASGGNGGRQS.

Belongs to the DNA mismatch repair MutL/HexB family.

This protein is involved in the repair of mismatches in DNA. It is required for dam-dependent methyl-directed DNA mismatch repair. May act as a 'molecular matchmaker', a protein that promotes the formation of a stable complex between two or more DNA-binding proteins in an ATP-dependent manner without itself being part of a final effector complex. The protein is DNA mismatch repair protein MutL of Salmonella typhi.